Reading from the N-terminus, the 61-residue chain is Venom protein 22.1 (61 aa).

A signal peptide spans 1 to 18; sequence MDIKGLLVILFFVLLITG.

This sequence belongs to the non-disulfide-bridged peptide (NDBP) superfamily. Long chain multifunctional peptide (group 2) family. Expressed by the venom gland.

It localises to the secreted. In Lychas mucronatus (Chinese swimming scorpion), this protein is Venom protein 22.1.